The primary structure comprises 250 residues: Manganese transport system ATP-binding protein MntB (250 aa).

Positions Val5 to Leu236 constitute an ABC transporter domain. Gly37–Ser44 serves as a coordination point for ATP.

This sequence belongs to the ABC transporter superfamily.

The protein localises to the cell membrane. Its function is as follows. This protein is probably a component of a manganese permease, a binding protein-dependent, ATP-driven transport system. Probably responsible for energy coupling to the transport system. In Halalkalibacterium halodurans (strain ATCC BAA-125 / DSM 18197 / FERM 7344 / JCM 9153 / C-125) (Bacillus halodurans), this protein is Manganese transport system ATP-binding protein MntB (mntB).